The primary structure comprises 185 residues: Large ribosomal subunit protein uL5 (185 aa).

This sequence belongs to the universal ribosomal protein uL5 family. Part of the 50S ribosomal subunit; part of the 5S rRNA/L5/L18/L25 subcomplex. Contacts the 5S rRNA and the P site tRNA. Forms a bridge to the 30S subunit in the 70S ribosome.

This is one of the proteins that bind and probably mediate the attachment of the 5S RNA into the large ribosomal subunit, where it forms part of the central protuberance. In the 70S ribosome it contacts protein S13 of the 30S subunit (bridge B1b), connecting the 2 subunits; this bridge is implicated in subunit movement. Contacts the P site tRNA; the 5S rRNA and some of its associated proteins might help stabilize positioning of ribosome-bound tRNAs. This chain is Large ribosomal subunit protein uL5, found in Azorhizobium caulinodans (strain ATCC 43989 / DSM 5975 / JCM 20966 / LMG 6465 / NBRC 14845 / NCIMB 13405 / ORS 571).